Consider the following 409-residue polypeptide: Glutamyl-tRNA reductase (409 aa).

Substrate-binding positions include Thr-48 to Arg-51, Ser-89, Glu-94 to Glu-96, and Gln-100. The active-site Nucleophile is the Cys-49. Residue Gly-165–Ala-170 coordinates NADP(+).

The protein belongs to the glutamyl-tRNA reductase family. Homodimer.

It carries out the reaction (S)-4-amino-5-oxopentanoate + tRNA(Glu) + NADP(+) = L-glutamyl-tRNA(Glu) + NADPH + H(+). It functions in the pathway porphyrin-containing compound metabolism; protoporphyrin-IX biosynthesis; 5-aminolevulinate from L-glutamyl-tRNA(Glu): step 1/2. In terms of biological role, catalyzes the NADPH-dependent reduction of glutamyl-tRNA(Glu) to glutamate 1-semialdehyde (GSA). The sequence is that of Glutamyl-tRNA reductase from Thermoplasma volcanium (strain ATCC 51530 / DSM 4299 / JCM 9571 / NBRC 15438 / GSS1).